The following is a 585-amino-acid chain: MNIFALFETRVREALESLTRSGRLPEGLDLSRVVVEPPRDASHGDLATNAALVLAKEAKQNPKALGEALAEELRTDPRIVEASVAGPGFINLRLAPEVFQDVIRAALSEGENFGRGQMPGGPVNIEYVSANPTGPMHVGHGRGAVFGDALANLLAAAGRPVTREYYINDAGAQVDVLARSAYLRYREALGETITIPEGLYPGDYLKPVGMRLAETHGRTLLDQPEHEWLPQVRRFAIDAMMAMIREDLAAIGIRHDVFFSEATLQGENGGKVAELLDALRQKGLVYEGRLPPPKGQLPDDWEDREQTLFRSSQFGDDVDRALLKSDGSFTYFASDIAYHRDKWLRGANELIDVLGADHGGYVKRMQAAVKAVSDGQARLDVKLCQLVRLLRAGEPVKMSKRAGEFVTLRDVIDEVGRDAIRFMMLYRKNDATLDFDLAKVVEQSKDNPVFYVQYGHARRFSVLRQAREALPGEDFSPAALLADADLSVLTDPGEIEMMRLIAQYPRVLESAAAAHEPHRIAFYLYETASSLHSFWNKGKDLPQLRIVNPTDRNSTRARLALVEALGGVLASGLAVLGVSAPNEMR.

The short motif at 130–140 (ANPTGPMHVGH) is the 'HIGH' region element.

It belongs to the class-I aminoacyl-tRNA synthetase family. In terms of assembly, monomer.

The protein resides in the cytoplasm. It carries out the reaction tRNA(Arg) + L-arginine + ATP = L-arginyl-tRNA(Arg) + AMP + diphosphate. In Methylorubrum extorquens (strain PA1) (Methylobacterium extorquens), this protein is Arginine--tRNA ligase.